Consider the following 235-residue polypeptide: LexA repressor (235 aa).

The segment at residues Ile-47–Arg-67 is a DNA-binding region (H-T-H motif). Catalysis depends on for autocatalytic cleavage activity residues Ser-159 and Lys-196.

Belongs to the peptidase S24 family. As to quaternary structure, homodimer.

The enzyme catalyses Hydrolysis of Ala-|-Gly bond in repressor LexA.. Represses a number of genes involved in the response to DNA damage (SOS response), including recA and lexA. In the presence of single-stranded DNA, RecA interacts with LexA causing an autocatalytic cleavage which disrupts the DNA-binding part of LexA, leading to derepression of the SOS regulon and eventually DNA repair. The protein is LexA repressor of Mycobacterium leprae (strain Br4923).